A 305-amino-acid polypeptide reads, in one-letter code: Serine/threonine-protein phosphatase PP-X isozyme 1 (305 aa).

4 residues coordinate Mn(2+): Asp-51, His-53, Asp-79, and Asn-111. The active-site Proton donor is His-112. Mn(2+) contacts are provided by His-161 and His-236.

It belongs to the PPP phosphatase family. PP-4 (PP-X) subfamily. In terms of assembly, interacts with TAP46. Mn(2+) serves as cofactor. In terms of tissue distribution, ubiquitous, mostly expressed in root mersitems, flowers, and vascular tissues.

It localises to the plastid stroma. The catalysed reaction is O-phospho-L-seryl-[protein] + H2O = L-seryl-[protein] + phosphate. It catalyses the reaction O-phospho-L-threonyl-[protein] + H2O = L-threonyl-[protein] + phosphate. In Arabidopsis thaliana (Mouse-ear cress), this protein is Serine/threonine-protein phosphatase PP-X isozyme 1 (PPX1).